Here is a 361-residue protein sequence, read N- to C-terminus: Protein RecA (361 aa).

ATP is bound at residue 77–84 (GPESSGKT).

It belongs to the RecA family.

The protein localises to the cytoplasm. Functionally, can catalyze the hydrolysis of ATP in the presence of single-stranded DNA, the ATP-dependent uptake of single-stranded DNA by duplex DNA, and the ATP-dependent hybridization of homologous single-stranded DNAs. It interacts with LexA causing its activation and leading to its autocatalytic cleavage. This Brucella suis (strain ATCC 23445 / NCTC 10510) protein is Protein RecA.